Consider the following 420-residue polypeptide: uncharacterized protein (420 aa).

The protein belongs to the mimivirus R160 family.

It is found in the virion. This is an uncharacterized protein from Acanthamoeba polyphaga mimivirus (APMV).